The primary structure comprises 309 residues: Probable manganese-dependent inorganic pyrophosphatase (309 aa).

Mn(2+) contacts are provided by His9, Asp13, Asp15, Asp75, His97, and Asp149.

Belongs to the PPase class C family. The cofactor is Mn(2+).

The protein resides in the cytoplasm. It carries out the reaction diphosphate + H2O = 2 phosphate + H(+). This is Probable manganese-dependent inorganic pyrophosphatase from Bacillus cereus (strain 03BB102).